The chain runs to 375 residues: Neuropeptide Y receptor type 4-2 (375 aa).

The Extracellular segment spans residues 1-39 (MNTSHLLALLLPKSPQGENRSKPLGTPYNFSEHCQDSVD). Residues asparagine 2, asparagine 19, and asparagine 29 are each glycosylated (N-linked (GlcNAc...) asparagine). A helical transmembrane segment spans residues 40–60 (VMVFIVTSYSIETVVGVLGNL). Topologically, residues 61 to 87 (CLMCVTVRQKEKANVTNLLIANLAFSD) are cytoplasmic. A helical membrane pass occupies residues 88–108 (FLMCLLCQPLTAVYTIMDYWI). Over 109 to 116 (FGETLCKM) the chain is Extracellular. Cysteines 114 and 201 form a disulfide. The chain crosses the membrane as a helical span at residues 117-137 (SAFIQCMSVTVSILSLVLVAL). Over 138–155 (ERHQLIINPTGWKPSISQ) the chain is Cytoplasmic. Residues 156-176 (AYLGIVLIWVIACVLSLPFLA) form a helical membrane-spanning segment. The Extracellular portion of the chain corresponds to 177 to 212 (NSILENVFHKNHSKALEFLADKVVCTESWPLAHHRT). N-linked (GlcNAc...) asparagine glycosylation occurs at asparagine 187. Residues 213–233 (IYTTFLLLFQYCLPLGFILVC) form a helical membrane-spanning segment. Topologically, residues 234–263 (YARIYRRLQRQGRVFHKGTYSLRAGHMKQV) are cytoplasmic. The helical transmembrane segment at 264–284 (NVVLVVMVVAFAVLWLPLHVF) threads the bilayer. Over 285-301 (NSLEDWHHEAIPICHGN) the chain is Extracellular. The helical transmembrane segment at 302-322 (LIFLVCHLLAMASTCVNPFIY) threads the bilayer. Over 323–375 (GFLNTNFKKEIKALVLTCQQSAPLEESEHLPLSTVHTEVSKGSLRLSGRSNPI) the chain is Cytoplasmic. The S-palmitoyl cysteine moiety is linked to residue cysteine 340.

This sequence belongs to the G-protein coupled receptor 1 family.

The protein resides in the cell membrane. Its function is as follows. G protein-coupled receptor for PPY/pancreatic polypeptide/PP, NPY/neuropeptide Y and PYY/peptide YY that is negatively coupled to cAMP. The rank order of affinity for these polypeptides and their derivatives is PP, PP (2-36) and [Ile-31, Gln-34] PP &gt; [Pro-34] PYY &gt; PYY and [Leu-31, Pro-34] NPY &gt; NPY &gt; PYY (3-36) and NPY (2-36) &gt; PP (13-36) &gt; PP (31-36) &gt; NPY free acid. In Homo sapiens (Human), this protein is Neuropeptide Y receptor type 4-2.